Consider the following 94-residue polypeptide: Putative testis-specific prion protein (94 aa).

The N-terminal stretch at 1-18 (MQHSLVFFFAVILHLSHL) is a signal peptide. N44 carries N-linked (GlcNAc...) asparagine glycosylation.

In terms of tissue distribution, specifically expressed in adult testis.

The protein localises to the secreted. In Homo sapiens (Human), this protein is Putative testis-specific prion protein (PRNT).